The chain runs to 90 residues: Hypnin-A3 (90 aa).

In terms of biological role, lectin specific for core(alpha 1-6)fucosylated N-glycans. Inhibits platelet aggregation. The chain is Hypnin-A3 from Hypnea japonica (Japanese red alga).